Reading from the N-terminus, the 783-residue chain is BMP/retinoic acid-inducible neural-specific protein 2 (783 aa).

Positions 1–33 (MRWQCGTRFRGLRPVVAPWTALLALGLPGWVLA) are cleaved as a signal peptide. Residues 85-281 (RYRIYREFAR…FVAAALSYIT (197 aa)) enclose the MACPF domain. N-linked (GlcNAc...) asparagine glycosylation is found at Asn-185, Asn-354, Asn-473, Asn-579, Asn-626, and Asn-658.

It belongs to the BRINP family.

It is found in the secreted. In terms of biological role, inhibits neuronal cell proliferation by negative regulation of the cell cycle transition. This is BMP/retinoic acid-inducible neural-specific protein 2 (BRINP2) from Pongo abelii (Sumatran orangutan).